Reading from the N-terminus, the 517-residue chain is Protein disulfide-isomerase A5 (517 aa).

An N-terminal signal peptide occupies residues 1–21 (MARAWGLLLAIGVVLPTWLSS). 4 disulfides stabilise this stretch: C83–C92, C180–C183, C303–C306, and C424–C427. Thioredoxin domains follow at residues 132 to 259 (FLKD…NPLP), 268 to 382 (PWAD…NPEA), and 376 to 504 (WMQN…TLRE). The Prevents secretion from ER signature appears at 514-517 (REEL).

Belongs to the protein disulfide isomerase family. As to quaternary structure, interacts with CALR (via P-domain).

It localises to the endoplasmic reticulum lumen. The enzyme catalyses Catalyzes the rearrangement of -S-S- bonds in proteins.. This is Protein disulfide-isomerase A5 (Pdia5) from Mus musculus (Mouse).